Consider the following 172-residue polypeptide: Transcription factor MafF (172 aa).

The tract at residues 51-76 (RLKQRRRTLKNRGYAASCRVKRVCQK) is basic motif. A bZIP domain is found at 51–114 (RLKQRRRTLK…DALRGKCEAL (64 aa)). The interval 79–93 (LQKQKSELEREVDKL) is leucine-zipper. Positions 140–172 (VKSAPSPGPGPAPGPGPASGPGPAPGPAPAACS) are disordered. A compositionally biased stretch (pro residues) spans 145 to 172 (SPGPGPAPGPGPASGPGPAPGPAPAACS).

Belongs to the bZIP family. Maf subfamily. Monomer and homo- or heterodimer. Interacts with MIP. Forms high affinity heterodimers with members of the CNC-bZIP family such as NFE2L1/NRF1.

It is found in the nucleus. Its function is as follows. Since they lack a putative transactivation domain, the small Mafs behave as transcriptional repressors when they dimerize among themselves. However, they seem to serve as transcriptional activators by dimerizing with other (usually larger) basic-zipper proteins, such as NFE2L1/NRF1, and recruiting them to specific DNA-binding sites. Interacts with the upstream promoter region of the oxytocin receptor gene. May be a transcriptional enhancer in the up-regulation of the oxytocin receptor gene at parturition. This Bos taurus (Bovine) protein is Transcription factor MafF (MAFF).